Consider the following 217-residue polypeptide: Ribosomal large subunit pseudouridine synthase E (217 aa).

D79 functions as the Nucleophile in the catalytic mechanism.

It belongs to the pseudouridine synthase RsuA family.

The enzyme catalyses uridine(2457) in 23S rRNA = pseudouridine(2457) in 23S rRNA. Responsible for synthesis of pseudouridine from uracil-2457 in 23S ribosomal RNA. This Escherichia coli O6:H1 (strain CFT073 / ATCC 700928 / UPEC) protein is Ribosomal large subunit pseudouridine synthase E (rluE).